Consider the following 338-residue polypeptide: S-adenosylmethionine:tRNA ribosyltransferase-isomerase (338 aa).

Belongs to the QueA family. As to quaternary structure, monomer.

Its subcellular location is the cytoplasm. It catalyses the reaction 7-aminomethyl-7-carbaguanosine(34) in tRNA + S-adenosyl-L-methionine = epoxyqueuosine(34) in tRNA + adenine + L-methionine + 2 H(+). It functions in the pathway tRNA modification; tRNA-queuosine biosynthesis. Transfers and isomerizes the ribose moiety from AdoMet to the 7-aminomethyl group of 7-deazaguanine (preQ1-tRNA) to give epoxyqueuosine (oQ-tRNA). The protein is S-adenosylmethionine:tRNA ribosyltransferase-isomerase of Francisella tularensis subsp. holarctica (strain FTNF002-00 / FTA).